Reading from the N-terminus, the 599-residue chain is MQTVNVDIAIVGAGGGGLRAAIAAAEANPNLKIALVSKVYPMRTHTVAAEGGAAAVIKEEDSYDKHFQDTVAGGDWLCEQDVVEYFVQHSPVEMTQLERWGCPWSRKADGDVNVRRFGGMKIERTWFAADKTGFHLLHTLFQTSIQYPQIQRFDEHFVLDILVDDGHARGMVAMNMMEGSLVQINANAVVIATGGGCRAFKFNTNGGIVTGDGLSMAYRHGVPLRDMEFVQYHPTGLPNTGILMTEGCRGEGGILVNKDGYRYLQDYGLGPETPIGKPQNKYMELGPRDKVSQAFWQEWKKGNTLKTAKGVDVVHLDLRHLGEKYLHERLPFICELASAYEGVNPVNEPIPVRPVVHYTMGGIEVDFNSETRIKGLFAVGECASSGLHGANRLGSNSLAELVVLGRVAGEYAAQRAVEAQSVNQSAVDAQAKDVVARLEALHKQEGNESWSEIRDEMGTVMEEGCGIYRDQASMQKAVDKIAELKERYKRIRVSDNSSVFNTDVLYTVELGYILDVAQSIANSAIERKESRGAHQRLDYTERDDVNYLKHTLAFYNENGAPRIEYSPVKITKSQPAKRVYGAEAEAQEAAAKAKEQANG.

FAD contacts are provided by residues 12-16 (GAGGG), 36-38 (VSK), 44-52 (THTVAAEGG), 156-158 (HFV), and Asp-212. The residue at position 45 (His-45) is a Tele-8alpha-FAD histidine. Active-site residues include His-233 and Arg-249. FAD is bound by residues 357–358 (HY), Glu-381, and 392–398 (RLGSNSL).

Belongs to the FAD-dependent oxidoreductase 2 family. FRD/SDH subfamily. Part of an enzyme complex containing four subunits: a flavoprotein (FrdA), an iron-sulfur protein (FrdB), and two hydrophobic anchor proteins (FrdC and FrdD). It depends on FAD as a cofactor.

Its subcellular location is the cell inner membrane. The enzyme catalyses a quinone + succinate = fumarate + a quinol. It carries out the reaction a menaquinone + succinate = a menaquinol + fumarate. This chain is Fumarate reductase flavoprotein subunit (frdA), found in Haemophilus influenzae (strain ATCC 51907 / DSM 11121 / KW20 / Rd).